The sequence spans 180 residues: Cytokinin-beta-glucosidase 1 (180 aa).

Its function is as follows. Hydrolyzes cytokinin glucosides thus liberating free cytokinins. This chain is Cytokinin-beta-glucosidase 1 (ROLC1), found in Panax ginseng (Korean ginseng).